The primary structure comprises 206 residues: LexA repressor (206 aa).

Residues 28–48 (RAEIATRLGFKSANAAEEHLK) constitute a DNA-binding region (H-T-H motif). Catalysis depends on for autocatalytic cleavage activity residues Ser-123 and Lys-160.

This sequence belongs to the peptidase S24 family. As to quaternary structure, homodimer.

It carries out the reaction Hydrolysis of Ala-|-Gly bond in repressor LexA.. Represses a number of genes involved in the response to DNA damage (SOS response), including recA and lexA. In the presence of single-stranded DNA, RecA interacts with LexA causing an autocatalytic cleavage which disrupts the DNA-binding part of LexA, leading to derepression of the SOS regulon and eventually DNA repair. This chain is LexA repressor, found in Shewanella putrefaciens (strain CN-32 / ATCC BAA-453).